The following is a 659-amino-acid chain: Pollen receptor-like kinase 6 (659 aa).

An N-terminal signal peptide occupies residues 1-26 (MAAAVLNPGFFLLILLLSFSISPSLQ). Over 27–266 (YVSESEPLVR…SVPETSNKAA (240 aa)) the chain is Extracellular. A disulfide bond links C58 and C67. 5 LRR repeats span residues 95–118 (LPNL…FFKL), 120–142 (GLKS…FFKD), 143–167 (MSKL…ITQL), 168–190 (PQLE…EFGS), and 192–214 (KNLK…SIAD). A glycan (N-linked (GlcNAc...) asparagine) is linked at N128. N179 carries N-linked (GlcNAc...) asparagine glycosylation. The N-linked (GlcNAc...) asparagine glycan is linked to N221. The segment at 226 to 242 (EYLCGPVVDVGCENIEL) is LURE peptides binding. C229 and C237 are disulfide-bonded. The disordered stretch occupies residues 241 to 260 (ELNDPQEGQPPSKPSSSVPE). Residues 267 to 287 (INAIMVSISLLLLFFIIVGVI) traverse the membrane as a helical segment. Over 288 to 659 (KRRNKKKNPD…AVRRIEQVKT (372 aa)) the chain is Cytoplasmic. A disordered region spans residues 312-354 (VRISESSSTTAKRSTDSSRKRGGHSDDGSTKKGVSNIGKGGNG). A compositionally biased stretch (basic and acidic residues) spans 324–341 (RSTDSSRKRGGHSDDGST). Residues 384-659 (KAAAEVLGNG…AVRRIEQVKT (276 aa)) enclose the Protein kinase domain. Residues 390 to 398 (LGNGSLGSA) and K412 contribute to the ATP site. S464 carries the post-translational modification Phosphoserine. T484 and T557 each carry phosphothreonine. S561 carries the phosphoserine modification.

This sequence belongs to the protein kinase superfamily. Ser/Thr protein kinase family. As to quaternary structure, interacts with ROPGEF8, ROPGEF9, ROPGEF12, ROPGEF13, PRK3, LIP1 and LIP2. Binds to LURE peptides via its LRR repeats; interacts with LURE1.1, LURE1.2, LURE1.3 and LURE1.4. Expressed specifically in the pollen tube, predominantly at the tip.

The protein localises to the cell membrane. Its subcellular location is the cytoplasmic granule. Key receptor for sensing species-specific attractants in cooperation with other pollen receptor-like kinases. Essential for pollen tube reorientation toward attractant peptides. In Arabidopsis thaliana (Mouse-ear cress), this protein is Pollen receptor-like kinase 6.